A 631-amino-acid polypeptide reads, in one-letter code: Guanylate-binding protein 4 (631 aa).

The GB1/RHD3-type G domain occupies 33-283; that stretch reads SQPVVVVAIV…FASYIFTYAK (251 aa). GTP contacts are provided by residues 43-50 and 103-107; these read GWSHTGKS and DTEGL. A coiled-coil region spans residues 492–592; it reads IAEKHTKKEA…GHNIKEMKQN (101 aa).

It belongs to the TRAFAC class dynamin-like GTPase superfamily. GB1/RHD3 GTPase family. GB1 subfamily. In terms of assembly, heterodimer with other family members, including GBP1, GBP2 and GBP5. Dimerization regulates subcellular location. Interacts with IRF7; preventing interaction between TRAF6 and IRF7, resulting in impaired TRAF6-mediated IRF7 ubiquitination. Mainly expressed in organs of the immune system, such as spleen and lymph nodes.

The protein localises to the golgi apparatus membrane. The protein resides in the cytoplasm. It localises to the nucleus. It is found in the perinuclear region. It catalyses the reaction GTP + H2O = GDP + phosphate + H(+). Functionally, interferon (IFN)-inducible GTPase that plays important roles in innate immunity against a diverse range of bacterial, viral and protozoan pathogens. Negatively regulates the antiviral response by inhibiting activation of IRF7 transcription factor. In Mus musculus (Mouse), this protein is Guanylate-binding protein 4.